The chain runs to 77 residues: Acyl carrier protein (77 aa).

In terms of domain architecture, Carrier spans Ala2–Thr77. Ser37 bears the O-(pantetheine 4'-phosphoryl)serine mark.

It belongs to the acyl carrier protein (ACP) family. 4'-phosphopantetheine is transferred from CoA to a specific serine of apo-ACP by AcpS. This modification is essential for activity because fatty acids are bound in thioester linkage to the sulfhydryl of the prosthetic group.

Its subcellular location is the cytoplasm. Its pathway is lipid metabolism; fatty acid biosynthesis. Functionally, carrier of the growing fatty acid chain in fatty acid biosynthesis. This chain is Acyl carrier protein, found in Geobacter sp. (strain M21).